We begin with the raw amino-acid sequence, 1191 residues long: MDPNNAAASSAHDLSSLDLSCLNEAERIVINSFMRGPHAHFEHLGVGPNVKWDENLSKRAFYHLVAINHATLKLLVAQARLCSMQQMNAPNLTNGASATALGSLHPFSLGNPATSVTMASNPLANGPGLRTQLMAPDFALALLGNGTTPHASAGLGALNPGLYNPSASILGGPSSSGASSVLPSPSAHTPDAATDANHLPNPDPASGRQELTRAGRPARKKMKATALDAALRTEMPNWPSVQDDFVRWTRLAWFEAGFASTISDGAIGVQTRRPFSPFLTTTFAQVGVHLPSMSPNLLRAFNSWVDMHLRSLRDHFKGRIDKPHAGKASLAARSLEDTTFVSLTEFINNMCNSYNLINSELSVAAVRALCKLYLNVRNMATAKDSEGVLRVHIRDASNRQPPNILRGTLPQDREDDDLLTLITECGAIDFDLPTDTSDTMALAVLMVMSTSATTLTLDQAGCFSSLSGAASAQVNLLTNVTCEWFSVTMVTESGTSTISLPSSTRPSAHISAHGKDFALSWPKITEGLEIDIGLTLELQHNVTLDAYELRAKVVNHRPKAKASLWQLELNLRNVRQPEDGSAFFPAGYGVRYQGAFAASGSYPSSGATMQWMAAGGGAANEGQGLYLAAHDGYGYIKFLNAAAVEDVASLSIVYLVEDAGLPFAESTMPFPLTLAVVGGGDDLWYQAAQMYRTFALGEAQWMQAGRLHQRQDIPGWYVNNSIWINSGWQCHDIFNETQGDPHTVLNVTRRIRERFNTNMALHWYEWQQGPDANASARYRFDTHYPDYLPPRGGDYFGTVVRELEKEGVHIFPYINGRIFDVASTSYAQHNGSDHCCRKANPSFGAADQSFYVESYGSGSTFHTADPTDIYWQTTLADTVDALVNTYGVEGVYIDQLAAAAPTPDWTSWHNHTKGGGFYWRTGIVDIIKAMRQRVGPTVPLVTESNSEPYMDAISGFLTLVAFEPAFVGTKALVPAFPAIYGGYFVGFGDIFNAEDLADQDPLMARVVAQFVYGAQLGWFSLGGVTSGPDVDTSCGKMGEYDLWMSESSDAIVAAVEYYGNLRVCLLEYLAHGRILAPPSLSPAPAEFMAVETAVQNAGPFPSAMSAVWLHEDEASAVIIVAGVLDAGQTYNVSVDLTFSLPSLHDRQVTVQEMSCDGLSQQLDVMPANDIQIYDVTLSDRNARVYRVHFGA.

A compositionally biased stretch (low complexity) spans 173 to 187 (PSSSGASSVLPSPSA). Residues 173–221 (PSSSGASSVLPSPSAHTPDAATDANHLPNPDPASGRQELTRAGRPARKK) are disordered.

It belongs to the glycoside hydrolase-like 3 (GHL3) family.

This is Putative glycoside hydrolase 22789 from Monosiga brevicollis (Choanoflagellate).